Consider the following 289-residue polypeptide: ADP-polyphosphate phosphotransferase (289 aa).

The protein belongs to the polyphosphate kinase 2 (PPK2) family. Class I subfamily.

The catalysed reaction is [phosphate](n) + ATP = [phosphate](n+1) + ADP. Uses inorganic polyphosphate (polyP) as a donor to convert ADP to ATP. The sequence is that of ADP-polyphosphate phosphotransferase from Rhodopseudomonas palustris (strain ATCC BAA-98 / CGA009).